Reading from the N-terminus, the 275-residue chain is MKNTVTTFQKAKNNGEKLTMLTAYDYSTAKLIDESGINGILVGDSLGMVCLGYEDTLSVTMEDMIHHTRAVSRGVKNTLVVGDMPFMSYQSSVYDAVVNAGRLIKEGGATAVKLEGGATVIEQIKAIVNAQIPVMAHIGLTPQSINVFGGFKVQGKDEEKAQKLIEDAKKIEEAGAFAIVLECVPAKLAELITKAVSIPTIGIGAGAGCDGQILVYQDMLGMFSDMSPKFVKKFADVGELMKDGFKAYIKEVQEGTFPSKEHCFKIDESVLDKLY.

Residues Asp44 and Asp83 each coordinate Mg(2+). 3-methyl-2-oxobutanoate-binding positions include 44-45 (DS), Asp83, and Lys113. Mg(2+) is bound at residue Glu115. The active-site Proton acceptor is Glu182.

Belongs to the PanB family. As to quaternary structure, homodecamer; pentamer of dimers. Mg(2+) is required as a cofactor.

It localises to the cytoplasm. It carries out the reaction 3-methyl-2-oxobutanoate + (6R)-5,10-methylene-5,6,7,8-tetrahydrofolate + H2O = 2-dehydropantoate + (6S)-5,6,7,8-tetrahydrofolate. It participates in cofactor biosynthesis; (R)-pantothenate biosynthesis; (R)-pantoate from 3-methyl-2-oxobutanoate: step 1/2. Functionally, catalyzes the reversible reaction in which hydroxymethyl group from 5,10-methylenetetrahydrofolate is transferred onto alpha-ketoisovalerate to form ketopantoate. In Clostridium novyi (strain NT), this protein is 3-methyl-2-oxobutanoate hydroxymethyltransferase.